The sequence spans 171 residues: Adenine phosphoribosyltransferase (171 aa).

Belongs to the purine/pyrimidine phosphoribosyltransferase family. In terms of assembly, homodimer.

Its subcellular location is the cytoplasm. It carries out the reaction AMP + diphosphate = 5-phospho-alpha-D-ribose 1-diphosphate + adenine. The protein operates within purine metabolism; AMP biosynthesis via salvage pathway; AMP from adenine: step 1/1. Its function is as follows. Catalyzes a salvage reaction resulting in the formation of AMP, that is energically less costly than de novo synthesis. The sequence is that of Adenine phosphoribosyltransferase from Prochlorococcus marinus (strain MIT 9515).